The sequence spans 207 residues: High frequency lysogenization protein HflD homolog (207 aa).

This sequence belongs to the HflD family.

Its subcellular location is the cytoplasm. The protein localises to the cell inner membrane. In Teredinibacter turnerae (strain ATCC 39867 / T7901), this protein is High frequency lysogenization protein HflD homolog.